The sequence spans 421 residues: Thymidine phosphorylase (421 aa).

This sequence belongs to the thymidine/pyrimidine-nucleoside phosphorylase family. In terms of assembly, homodimer.

It catalyses the reaction thymidine + phosphate = 2-deoxy-alpha-D-ribose 1-phosphate + thymine. In terms of biological role, the enzymes which catalyze the reversible phosphorolysis of pyrimidine nucleosides are involved in the degradation of these compounds and in their utilization as carbon and energy sources, or in the rescue of pyrimidine bases for nucleotide synthesis. This Mycoplasma pneumoniae (strain ATCC 29342 / M129 / Subtype 1) (Mycoplasmoides pneumoniae) protein is Thymidine phosphorylase (deoA).